Reading from the N-terminus, the 847-residue chain is Leucine--tRNA ligase (847 aa).

The 'HIGH' region signature appears at 41-51 (PYPSGRIHMGH). The 'KMSKS' region motif lies at 619 to 623 (KMSKS). Lys622 provides a ligand contact to ATP.

This sequence belongs to the class-I aminoacyl-tRNA synthetase family.

Its subcellular location is the cytoplasm. The catalysed reaction is tRNA(Leu) + L-leucine + ATP = L-leucyl-tRNA(Leu) + AMP + diphosphate. This chain is Leucine--tRNA ligase, found in Cereibacter sphaeroides (strain KD131 / KCTC 12085) (Rhodobacter sphaeroides).